The following is a 1561-amino-acid chain: Adhesion G protein-coupled receptor B2 (1561 aa).

An N-terminal signal peptide occupies residues 1 to 20 (MTPACPLLLSVILSLRLATA). Residues 21 to 930 (FDPAPSACSA…ELAGAPSVPL (910 aa)) lie on the Extracellular side of the membrane. N-linked (GlcNAc...) asparagine glycans are attached at residues asparagine 94, asparagine 182, and asparagine 183. An O-linked (Xyl...) (chondroitin sulfate) serine glycan is attached at serine 257. TSP type-1 domains follow at residues 300–353 (DPAA…ATCP), 355–408 (HGVW…AACP), 410–463 (EGQW…LDCP), and 466–519 (DGKW…KRCP). Intrachain disulfides connect cysteine 312/cysteine 346, cysteine 316/cysteine 352, cysteine 327/cysteine 336, cysteine 367/cysteine 402, cysteine 371/cysteine 407, cysteine 382/cysteine 392, cysteine 422/cysteine 457, cysteine 426/cysteine 462, cysteine 437/cysteine 447, cysteine 478/cysteine 513, cysteine 482/cysteine 518, cysteine 493/cysteine 503, cysteine 525/cysteine 560, and cysteine 548/cysteine 578. The N-linked (GlcNAc...) asparagine glycan is linked to asparagine 347. Asparagine 428 carries N-linked (GlcNAc...) asparagine glycosylation. 2 N-linked (GlcNAc...) asparagine glycosylation sites follow: asparagine 551 and asparagine 636. A GAIN-B domain is found at 748 to 918 (DRLFLPKEVL…AVLAQPPKDL (171 aa)). The disordered stretch occupies residues 757 to 797 (LSLSSPGKPATPGAATAGSPGRGRGPGTVPPGPGHAHQRLL). Over residues 760–775 (SSPGKPATPGAATAGS) the composition is skewed to low complexity. A glycan (N-linked (GlcNAc...) asparagine) is linked at asparagine 861. 2 disulfide bridges follow: cysteine 868–cysteine 900 and cysteine 888–cysteine 902. The tract at residues 868-918 (CASWDYSRADTNSGDWNTESCQTLETQAAHTRCQCQHLSTFAVLAQPPKDL) is GPS. A helical transmembrane segment spans residues 931-951 (VIGCAVSCMALLTLLAIYAAF). At 952–959 (WRFIKSER) the chain is on the cytoplasmic side. A helical transmembrane segment spans residues 960–980 (SIILLNFCLSILASNILILVG). Residues 981-988 (QSRVLSKG) lie on the Extracellular side of the membrane. The helical transmembrane segment at 989-1009 (VCTMTAAFLHFFFLSSFCWVL) threads the bilayer. The Cytoplasmic portion of the chain corresponds to 1010–1030 (TEAWQSYLAVIGRMRTRLVRK). The helical transmembrane segment at 1031–1051 (RFLCLGWGLPALVVAVSVGFT) threads the bilayer. The Extracellular segment spans residues 1052–1072 (RTKGYGTSSYCWLSLEGGLLY). A helical membrane pass occupies residues 1073 to 1093 (AFVGPAAVIVLVNMLIGIIVF). At 1094 to 1115 (NKLMARDGVSDKSKKQRAGSER) the chain is on the cytoplasmic side. Residues 1116–1136 (CPWASLLLPCSACGAVPSPLL) form a helical membrane-spanning segment. At 1137-1147 (SSASARNAMAS) the chain is on the extracellular side. Residues 1148–1168 (LWSSCVVLPLLALTWMSAVLA) form a helical membrane-spanning segment. The Cytoplasmic segment spans residues 1169–1561 (MTDRRSVLFQ…PPDGDFQTEV (393 aa)). Tyrosine 1345 bears the Phosphotyrosine mark. Disordered stretches follow at residues 1355-1377 (LQPG…GTPR), 1417-1447 (FQPP…PGST), and 1491-1561 (RYRS…QTEV). Basic and acidic residues predominate over residues 1366–1376 (EAPRARPEGTP). Over residues 1491–1502 (RYRSQSSAKEKP) the composition is skewed to basic and acidic residues. Positions 1519-1528 (SWSTFKSMTL) are enriched in polar residues. A compositionally biased stretch (acidic residues) spans 1551–1561 (EPPDGDFQTEV).

The protein belongs to the G-protein coupled receptor 2 family. Adhesion G-protein coupled receptor (ADGR) subfamily. Heterodimer of 2 chains generated by proteolytic processing; the large extracellular N-terminal fragment and the membrane-bound C-terminal fragment predominantly remain associated and non-covalently linked. Interacts with GABPB2. Interacts (via carboxy-terminus) with TAX1BP3. Interacts with GNAZ. Interacts with SH3GL2. Post-translationally, glycosylated. In terms of processing, autoproteolytically processed at the GPS region of the GAIN-B domain; this cleavage modulates receptor activity. Additionally, furin is involved in the cleavage at another site, in the middle of the extracellular domain, generating a soluble fragment. As to expression, specifically expressed in the brain. The peak level in the brain is observed 10 days after birth.

Its subcellular location is the cell membrane. It is found in the secreted. Its activity is regulated as follows. Receptor activity is regulated by proteolytic processing. The long N-terminal has a an inhibitory effect on the constitutive signaling activity. Removal of the N-terminal region induces an increase of the receptor activity. Orphan G-protein coupled receptor involved in cell adhesion and probably in cell-cell interactions. Activates NFAT-signaling pathway, a transcription factor, via the G-protein GNAZ. Involved in angiogenesis inhibition. The chain is Adhesion G protein-coupled receptor B2 (Adgrb2) from Mus musculus (Mouse).